A 284-amino-acid chain; its full sequence is 2-dehydro-3-deoxyphosphooctonate aldolase (284 aa).

Belongs to the KdsA family.

It localises to the cytoplasm. The catalysed reaction is D-arabinose 5-phosphate + phosphoenolpyruvate + H2O = 3-deoxy-alpha-D-manno-2-octulosonate-8-phosphate + phosphate. Its pathway is carbohydrate biosynthesis; 3-deoxy-D-manno-octulosonate biosynthesis; 3-deoxy-D-manno-octulosonate from D-ribulose 5-phosphate: step 2/3. It participates in bacterial outer membrane biogenesis; lipopolysaccharide biosynthesis. The protein is 2-dehydro-3-deoxyphosphooctonate aldolase of Enterobacter sp. (strain 638).